A 984-amino-acid chain; its full sequence is Probable translation initiation factor IF-2 (984 aa).

In terms of domain architecture, DOD-type homing endonuclease spans 94–215; it reads VNGWYSVTVT…LPLLLLRFGI (122 aa). Residues 391 to 608 enclose the tr-type G domain; the sequence is TTETHNFVAN…LIAGLSQKYL (218 aa). Residues 464–468 and 518–521 contribute to the GTP site; these read DTPGH and NKID.

Belongs to the TRAFAC class translation factor GTPase superfamily. Classic translation factor GTPase family. IF-2 subfamily. In terms of processing, this protein undergoes a protein self splicing that involves a post-translational excision of the intervening region (intein) followed by peptide ligation.

In terms of biological role, function in general translation initiation by promoting the binding of the formylmethionine-tRNA to ribosomes. Seems to function along with eIF-2. The chain is Probable translation initiation factor IF-2 (infB) from Pyrococcus furiosus (strain ATCC 43587 / DSM 3638 / JCM 8422 / Vc1).